The chain runs to 652 residues: uncharacterized protein (652 aa).

A compositionally biased stretch (basic and acidic residues) spans 1–13 (MSVTESKAKTERK). A disordered region spans residues 1–21 (MSVTESKAKTERKSSRKPAKT).

Belongs to the ParB family.

This is an uncharacterized protein from Escherichia coli (strain K12).